We begin with the raw amino-acid sequence, 313 residues long: Porphobilinogen deaminase (313 aa).

Position 249 is an S-(dipyrrolylmethanemethyl)cysteine (Cys249).

This sequence belongs to the HMBS family. In terms of assembly, monomer. Dipyrromethane serves as cofactor.

The catalysed reaction is 4 porphobilinogen + H2O = hydroxymethylbilane + 4 NH4(+). It participates in porphyrin-containing compound metabolism; protoporphyrin-IX biosynthesis; coproporphyrinogen-III from 5-aminolevulinate: step 2/4. Functionally, tetrapolymerization of the monopyrrole PBG into the hydroxymethylbilane pre-uroporphyrinogen in several discrete steps. The protein is Porphobilinogen deaminase of Paracoccus denitrificans (strain Pd 1222).